Consider the following 152-residue polypeptide: UPF0178 protein NIS_0137 (152 aa).

This sequence belongs to the UPF0178 family.

The polypeptide is UPF0178 protein NIS_0137 (Nitratiruptor sp. (strain SB155-2)).